We begin with the raw amino-acid sequence, 109 residues long: Cell division suppressor protein YneA (109 aa).

One can recognise a LysM domain in the interval serine 39 to isoleucine 90.

Belongs to the YneA family.

The protein localises to the cytoplasm. Inhibits cell division during the SOS response. Affects a later stage of the cell division protein assembly, after the assembly of the Z ring, by probably suppressing recruitment of FtsL and/or DivIC to the division machinery. This is Cell division suppressor protein YneA from Listeria monocytogenes serovar 1/2a (strain ATCC BAA-679 / EGD-e).